The chain runs to 336 residues: Holliday junction branch migration complex subunit RuvB (336 aa).

The large ATPase domain (RuvB-L) stretch occupies residues 4-184 (ADRLISAGAT…FGIVQRLEFY (181 aa)). ATP is bound by residues isoleucine 23, arginine 24, glycine 65, lysine 68, threonine 69, threonine 70, 131–133 (EDY), arginine 174, tyrosine 184, and arginine 221. Residue threonine 69 participates in Mg(2+) binding. A small ATPAse domain (RuvB-S) region spans residues 185–255 (QVPDLQHIVG…IAAQALDMLN (71 aa)). The head domain (RuvB-H) stretch occupies residues 258 to 336 (AEGFDYMDRK…HFGITPPEMP (79 aa)). DNA contacts are provided by arginine 294, arginine 313, and arginine 318.

Belongs to the RuvB family. In terms of assembly, homohexamer. Forms an RuvA(8)-RuvB(12)-Holliday junction (HJ) complex. HJ DNA is sandwiched between 2 RuvA tetramers; dsDNA enters through RuvA and exits via RuvB. An RuvB hexamer assembles on each DNA strand where it exits the tetramer. Each RuvB hexamer is contacted by two RuvA subunits (via domain III) on 2 adjacent RuvB subunits; this complex drives branch migration. In the full resolvosome a probable DNA-RuvA(4)-RuvB(12)-RuvC(2) complex forms which resolves the HJ.

It localises to the cytoplasm. The catalysed reaction is ATP + H2O = ADP + phosphate + H(+). The RuvA-RuvB-RuvC complex processes Holliday junction (HJ) DNA during genetic recombination and DNA repair, while the RuvA-RuvB complex plays an important role in the rescue of blocked DNA replication forks via replication fork reversal (RFR). RuvA specifically binds to HJ cruciform DNA, conferring on it an open structure. The RuvB hexamer acts as an ATP-dependent pump, pulling dsDNA into and through the RuvAB complex. RuvB forms 2 homohexamers on either side of HJ DNA bound by 1 or 2 RuvA tetramers; 4 subunits per hexamer contact DNA at a time. Coordinated motions by a converter formed by DNA-disengaged RuvB subunits stimulates ATP hydrolysis and nucleotide exchange. Immobilization of the converter enables RuvB to convert the ATP-contained energy into a lever motion, pulling 2 nucleotides of DNA out of the RuvA tetramer per ATP hydrolyzed, thus driving DNA branch migration. The RuvB motors rotate together with the DNA substrate, which together with the progressing nucleotide cycle form the mechanistic basis for DNA recombination by continuous HJ branch migration. Branch migration allows RuvC to scan DNA until it finds its consensus sequence, where it cleaves and resolves cruciform DNA. The chain is Holliday junction branch migration complex subunit RuvB from Salmonella arizonae (strain ATCC BAA-731 / CDC346-86 / RSK2980).